A 120-amino-acid chain; its full sequence is MFLLFEYETFWIFLLISSLMPILAFLISRALAPISEGPEKLTSYESGIEAMGDAWIQFRIRYYMFALVFVVFDVETVFLYPWAMSFDILGISTFIEASIFVLILIVGSVHAWRRGALEWS.

3 helical membrane passes run 7 to 27, 64 to 84, and 88 to 108; these read YETF…AFLI, MFAL…PWAM, and ILGI…IVGS.

The protein belongs to the complex I subunit 3 family. NDH is composed of at least 16 different subunits, 5 of which are encoded in the nucleus.

The protein localises to the plastid. It is found in the chloroplast thylakoid membrane. It carries out the reaction a plastoquinone + NADH + (n+1) H(+)(in) = a plastoquinol + NAD(+) + n H(+)(out). It catalyses the reaction a plastoquinone + NADPH + (n+1) H(+)(in) = a plastoquinol + NADP(+) + n H(+)(out). Its function is as follows. NDH shuttles electrons from NAD(P)H:plastoquinone, via FMN and iron-sulfur (Fe-S) centers, to quinones in the photosynthetic chain and possibly in a chloroplast respiratory chain. The immediate electron acceptor for the enzyme in this species is believed to be plastoquinone. Couples the redox reaction to proton translocation, and thus conserves the redox energy in a proton gradient. The chain is NAD(P)H-quinone oxidoreductase subunit 3, chloroplastic from Cycas taitungensis (Prince sago).